Here is a 380-residue protein sequence, read N- to C-terminus: Cytochrome b (380 aa).

4 helical membrane passes run 34-54, 78-99, 114-134, and 179-199; these read FGSLLAVCLATQILTGLLLAM, WLIRNLHANGASFFFICIFLHI, WNTGVILLLTLMATAFVGYVL, and FFALHFLLPFVIAGITIIHLT. 2 residues coordinate heme b: His84 and His98. Residues His183 and His197 each coordinate heme b. His202 is an a ubiquinone binding site. The next 4 membrane-spanning stretches (helical) occupy residues 227–247, 289–309, 321–341, and 348–368; these read LKDILGLALMFIPFLALALFS, LGGVLALAASVLILLLIPFLH, LSQILFWLLVANLLVLTWIGS, and FIIIGQVASFSYFNILLILFP.

The protein belongs to the cytochrome b family. In terms of assembly, the cytochrome bc1 complex contains 11 subunits: 3 respiratory subunits (MT-CYB, CYC1 and UQCRFS1), 2 core proteins (UQCRC1 and UQCRC2) and 6 low-molecular weight proteins (UQCRH/QCR6, UQCRB/QCR7, UQCRQ/QCR8, UQCR10/QCR9, UQCR11/QCR10 and a cleavage product of UQCRFS1). This cytochrome bc1 complex then forms a dimer. The cofactor is heme b.

It localises to the mitochondrion inner membrane. In terms of biological role, component of the ubiquinol-cytochrome c reductase complex (complex III or cytochrome b-c1 complex) that is part of the mitochondrial respiratory chain. The b-c1 complex mediates electron transfer from ubiquinol to cytochrome c. Contributes to the generation of a proton gradient across the mitochondrial membrane that is then used for ATP synthesis. The protein is Cytochrome b (MT-CYB) of Polyplectron bicalcaratum (Grey peacock-pheasant).